The primary structure comprises 332 residues: Phosphate acyltransferase (332 aa).

The protein belongs to the PlsX family. In terms of assembly, homodimer. Probably interacts with PlsY.

The protein resides in the cytoplasm. It carries out the reaction a fatty acyl-[ACP] + phosphate = an acyl phosphate + holo-[ACP]. The protein operates within lipid metabolism; phospholipid metabolism. Functionally, catalyzes the reversible formation of acyl-phosphate (acyl-PO(4)) from acyl-[acyl-carrier-protein] (acyl-ACP). This enzyme utilizes acyl-ACP as fatty acyl donor, but not acyl-CoA. This Fusobacterium nucleatum subsp. nucleatum (strain ATCC 25586 / DSM 15643 / BCRC 10681 / CIP 101130 / JCM 8532 / KCTC 2640 / LMG 13131 / VPI 4355) protein is Phosphate acyltransferase.